The following is a 193-amino-acid chain: dCTP deaminase (193 aa).

DCTP-binding positions include 110 to 115 (RSSLAR), aspartate 128, 136 to 138 (VLE), tyrosine 171, lysine 178, and glutamine 182. Glutamate 138 (proton donor/acceptor) is an active-site residue. The segment at 168–193 (DRPYNRRQDAKYKNQQGAVSSRIDED) is disordered. The span at 170–179 (PYNRRQDAKY) shows a compositional bias: basic and acidic residues.

It belongs to the dCTP deaminase family. As to quaternary structure, homotrimer.

It carries out the reaction dCTP + H2O + H(+) = dUTP + NH4(+). It functions in the pathway pyrimidine metabolism; dUMP biosynthesis; dUMP from dCTP (dUTP route): step 1/2. Functionally, catalyzes the deamination of dCTP to dUTP. In Photorhabdus laumondii subsp. laumondii (strain DSM 15139 / CIP 105565 / TT01) (Photorhabdus luminescens subsp. laumondii), this protein is dCTP deaminase.